Here is a 462-residue protein sequence, read N- to C-terminus: Coagulation factor IX (462 aa).

An N-terminal signal peptide occupies residues 1 to 21 (MADAPGLIPIFLLGYLLSTEC). The propeptide occupies 22 to 39 (AVFLDRENATKILTRPKR). Positions 40, 41, 46, 47, 54, 56, 59, 60, 65, 66, and 69 each coordinate Ca(2+). The region spanning 40–86 (YNSGKLEEFVQGNLERECIEERCSFEEAREVFENTEKTTEFWKQYVD) is the Gla domain. 11 positions are modified to 4-carboxyglutamate: E46, E47, E54, E56, E59, E60, E65, E66, E69, E72, and E75. E54 provides a ligand contact to Mg(2+). The cysteines at positions 57 and 62 are disulfide-linked. E59 lines the Mg(2+) pocket. E65 lines the Mg(2+) pocket. E69 provides a ligand contact to Mg(2+). E75 is a Ca(2+) binding site. Residue E75 participates in Mg(2+) binding. T78 carries an O-linked (GalNAc...) threonine glycan. E79, D86, G87, and Q89 together coordinate Ca(2+). E79 is subject to 4-carboxyglutamate. A Mg(2+)-binding site is contributed by E79. Residues 86–122 (DGDQCESNPCLNGGICKDDINSYECWCQAGFEGRNCE) enclose the EGF-like; calcium-binding domain. Disulfide bonds link C90–C101, C95–C110, C112–C121, C127–C138, C134–C148, C150–C163, C171–C336, C253–C269, C383–C397, and C408–C436. S92 carries an O-linked (Glc...) serine glycan. The Ca(2+) site is built by D103 and D104. D103 carries the (3R)-3-hydroxyaspartate modification. The residue at position 107 (S107) is a Phosphoserine. A propeptide spans 186-227 (AETVFSNTDYGNSTELILDDITNSTILDNLTENSEPINDFTR) (activation peptide). Y195 is modified (sulfotyrosine). The residue at position 198 (S198) is a Phosphoserine. At T199 the chain carries Phosphothreonine; alternate. Residue T199 is glycosylated (O-linked (GalNAc...) threonine; alternate). N-linked (GlcNAc...) asparagine glycosylation is found at N208 and N214. T216 and T226 each carry an O-linked (GalNAc...) threonine glycan. The region spanning 228–460 (VVGGENAKPG…YVNWIKEKTK (233 aa)) is the Peptidase S1 domain. H268 (charge relay system) is an active-site residue. 5 residues coordinate Ca(2+): E282, N284, E287, E289, and E292. The N-linked (GlcNAc...) asparagine glycan is linked to N307. Catalysis depends on D316, which acts as the Charge relay system. The active-site Charge relay system is S412.

This sequence belongs to the peptidase S1 family. As to quaternary structure, heterodimer of a light chain and a heavy chain; disulfide-linked. Interacts (inactive and activated) with F11 (activated) in calcium-dependent manner. Interacts with SERPINC1. Interacts (inactive and activated) with nitrophorin-2, an anticoagulant protein from Rhodnius prolixus. In terms of processing, activated by factor XIa, which excises the activation peptide. The propeptide can also be removed by snake venom protease. Activated by coagulation factor VIIa-tissue factor (F7-F3) complex in calcium-dependent manner. The iron and 2-oxoglutarate dependent 3-hydroxylation of aspartate and asparagine is (R) stereospecific within EGF domains. Post-translationally, predominantly O-glucosylated at Ser-92 by POGLUT1 in vitro.

It localises to the secreted. The enzyme catalyses Selective cleavage of Arg-|-Ile bond in factor X to form factor Xa.. In terms of biological role, factor IX is a vitamin K-dependent plasma protein that participates in the intrinsic pathway of blood coagulation by converting factor X to its active form in the presence of Ca(2+) ions, phospholipids, and factor VIIIa. The polypeptide is Coagulation factor IX (F9) (Rattus norvegicus (Rat)).